The sequence spans 119 residues: Large ribosomal subunit protein bL20 (119 aa).

Belongs to the bacterial ribosomal protein bL20 family.

Binds directly to 23S ribosomal RNA and is necessary for the in vitro assembly process of the 50S ribosomal subunit. It is not involved in the protein synthesizing functions of that subunit. The polypeptide is Large ribosomal subunit protein bL20 (Alkalilimnicola ehrlichii (strain ATCC BAA-1101 / DSM 17681 / MLHE-1)).